The chain runs to 446 residues: Exopolygalacturonase (446 aa).

A signal peptide spans 1-17; that stretch reads MRVTDIISCALLQASIA. N-linked (GlcNAc...) asparagine glycans are attached at residues N53, N118, N134, and N204. The PbH1 1 repeat unit spans residues 236-257; that stretch reads SDNIIIQNSNINNGDDCVSFKP. D250 acts as the Proton donor in catalysis. A disulfide bridge links C252 with C269. N258 and N270 each carry an N-linked (GlcNAc...) asparagine glycan. PbH1 repeat units lie at residues 259 to 279, 290 to 311, and 332 to 353; these read STNI…SVGS, VENI…RIKV, and VRNV…EITQ. Residue H273 is part of the active site. N-linked (GlcNAc...) asparagine glycosylation is found at N297, N302, N334, N359, and N369. PbH1 repeat units lie at residues 367-398 and 403-434; these read PSNL…VVCS and CSDI…QSQV. Disulfide bonds link C397–C403 and C424–C436. N435 carries an N-linked (GlcNAc...) asparagine glycan.

Belongs to the glycosyl hydrolase 28 family.

The protein localises to the secreted. It catalyses the reaction [(1-&gt;4)-alpha-D-galacturonosyl](n) + H2O = alpha-D-galacturonate + [(1-&gt;4)-alpha-D-galacturonosyl](n-1). Its function is as follows. Hydrolysis of 1,4-alpha-D-galactosiduronic linkages in pectate and other galacturonans. The polypeptide is Exopolygalacturonase (PGX1) (Cochliobolus carbonum (Maize leaf spot fungus)).